Consider the following 371-residue polypeptide: Bifunctional enzyme IspD/IspF (371 aa).

The 2-C-methyl-D-erythritol 4-phosphate cytidylyltransferase stretch occupies residues 1–212; it reads MLDISLIMLG…CLIPPSNEHF (212 aa). Residues 212–371 are 2-C-methyl-D-erythritol 2,4-cyclodiphosphate synthase; it reads FTGIGFDAHE…ANLKYYDWTK (160 aa). 2 residues coordinate a divalent metal cation: Asp218 and His220. 4-CDP-2-C-methyl-D-erythritol 2-phosphate is bound by residues 218 to 220 and 244 to 245; these read DAH and HS. His252 serves as a coordination point for a divalent metal cation. 4-CDP-2-C-methyl-D-erythritol 2-phosphate-binding positions include 266 to 268, 271 to 275, 342 to 345, Phe349, and Arg352; these read DIG, FPDTD, and TTTE.

The protein in the N-terminal section; belongs to the IspD/TarI cytidylyltransferase family. IspD subfamily. It in the C-terminal section; belongs to the IspF family. A divalent metal cation is required as a cofactor.

It carries out the reaction 2-C-methyl-D-erythritol 4-phosphate + CTP + H(+) = 4-CDP-2-C-methyl-D-erythritol + diphosphate. The enzyme catalyses 4-CDP-2-C-methyl-D-erythritol 2-phosphate = 2-C-methyl-D-erythritol 2,4-cyclic diphosphate + CMP. It functions in the pathway isoprenoid biosynthesis; isopentenyl diphosphate biosynthesis via DXP pathway; isopentenyl diphosphate from 1-deoxy-D-xylulose 5-phosphate: step 2/6. Its pathway is isoprenoid biosynthesis; isopentenyl diphosphate biosynthesis via DXP pathway; isopentenyl diphosphate from 1-deoxy-D-xylulose 5-phosphate: step 4/6. Bifunctional enzyme that catalyzes the formation of 4-diphosphocytidyl-2-C-methyl-D-erythritol from CTP and 2-C-methyl-D-erythritol 4-phosphate (MEP) (IspD), and catalyzes the conversion of 4-diphosphocytidyl-2-C-methyl-D-erythritol 2-phosphate (CDP-ME2P) to 2-C-methyl-D-erythritol 2,4-cyclodiphosphate (ME-CPP) with a corresponding release of cytidine 5-monophosphate (CMP) (IspF). The polypeptide is Bifunctional enzyme IspD/IspF (Campylobacter curvus (strain 525.92)).